We begin with the raw amino-acid sequence, 171 residues long: Large ribosomal subunit protein bL9 (171 aa).

Belongs to the bacterial ribosomal protein bL9 family.

In terms of biological role, binds to the 23S rRNA. This Rickettsia rickettsii (strain Iowa) protein is Large ribosomal subunit protein bL9.